A 485-amino-acid polypeptide reads, in one-letter code: MSAIRTLHQQLIAKERSAVEILTETFAHIEAVEPKVKAFLTLTKEQALAQAAQVDAKIAAGETIGLLEGIPIAIKDNLCTKGIQTTCASRILEGFVPTYESTVTQELQEAGAIMVGKTNLDEFAMGSSTENSGYQVTGNPWDVTRVPGGSSGGSAAAVAAGEAPIALGSDTGGSIRQPASLCGVVGLKPTYGLVSRFGLVAYASSLDQIGPFARTVEDTAILLEAIAGHDPKDSTSLDVDIPQYSQLLQPELPKDKPLKIGIIQETFGEGLDPEVAEAVQKAIAQLQELGAEVETISCPRFRYGLPAYYIIAPSEASANLARYDAVKYGTRNAAADNLVDMYTQTRAAGFGPEVKRRIMLGTYTLSAGYYDAYYLKAQKVRTLIKKDFDQAFAKVDVLICPTSPSTAFKAGEKTDDPLSMYLSDLMTIPVNLAGLPALSLPCGFDAQGLPIGMQLIGNVLREDLLLQVAHVYEQATAWHQKQPQL.

Active-site charge relay system residues include lysine 75 and serine 150. The active-site Acyl-ester intermediate is the serine 174.

Belongs to the amidase family. GatA subfamily. In terms of assembly, heterotrimer of A, B and C subunits.

The enzyme catalyses L-glutamyl-tRNA(Gln) + L-glutamine + ATP + H2O = L-glutaminyl-tRNA(Gln) + L-glutamate + ADP + phosphate + H(+). Functionally, allows the formation of correctly charged Gln-tRNA(Gln) through the transamidation of misacylated Glu-tRNA(Gln) in organisms which lack glutaminyl-tRNA synthetase. The reaction takes place in the presence of glutamine and ATP through an activated gamma-phospho-Glu-tRNA(Gln). This is Glutamyl-tRNA(Gln) amidotransferase subunit A from Picosynechococcus sp. (strain ATCC 27264 / PCC 7002 / PR-6) (Agmenellum quadruplicatum).